The following is a 127-amino-acid chain: Aspartate 1-decarboxylase (127 aa).

Residue Ser25 is the Schiff-base intermediate with substrate; via pyruvic acid of the active site. Ser25 carries the pyruvic acid (Ser) modification. Residue Thr57 coordinates substrate. Tyr58 serves as the catalytic Proton donor. 73–75 provides a ligand contact to substrate; it reads GAA.

Belongs to the PanD family. Heterooctamer of four alpha and four beta subunits. Requires pyruvate as cofactor. Is synthesized initially as an inactive proenzyme, which is activated by self-cleavage at a specific serine bond to produce a beta-subunit with a hydroxyl group at its C-terminus and an alpha-subunit with a pyruvoyl group at its N-terminus.

The protein resides in the cytoplasm. The catalysed reaction is L-aspartate + H(+) = beta-alanine + CO2. It participates in cofactor biosynthesis; (R)-pantothenate biosynthesis; beta-alanine from L-aspartate: step 1/1. Catalyzes the pyruvoyl-dependent decarboxylation of aspartate to produce beta-alanine. In Listeria innocua serovar 6a (strain ATCC BAA-680 / CLIP 11262), this protein is Aspartate 1-decarboxylase.